The sequence spans 397 residues: Succinate--CoA ligase [ADP-forming] subunit beta (397 aa).

The ATP-grasp domain maps to 9–254 (KALLRSYGAP…ETEEDPKELA (246 aa)). ATP is bound by residues K46, 53 to 55 (GRG), E109, S112, and E117. Residues N209 and D223 each contribute to the Mg(2+) site. Substrate-binding positions include N274 and 331-333 (GIM).

Belongs to the succinate/malate CoA ligase beta subunit family. Heterotetramer of two alpha and two beta subunits. Mg(2+) is required as a cofactor.

It carries out the reaction succinate + ATP + CoA = succinyl-CoA + ADP + phosphate. It catalyses the reaction GTP + succinate + CoA = succinyl-CoA + GDP + phosphate. The protein operates within carbohydrate metabolism; tricarboxylic acid cycle; succinate from succinyl-CoA (ligase route): step 1/1. Succinyl-CoA synthetase functions in the citric acid cycle (TCA), coupling the hydrolysis of succinyl-CoA to the synthesis of either ATP or GTP and thus represents the only step of substrate-level phosphorylation in the TCA. The beta subunit provides nucleotide specificity of the enzyme and binds the substrate succinate, while the binding sites for coenzyme A and phosphate are found in the alpha subunit. This chain is Succinate--CoA ligase [ADP-forming] subunit beta, found in Cereibacter sphaeroides (strain ATCC 17029 / ATH 2.4.9) (Rhodobacter sphaeroides).